A 445-amino-acid chain; its full sequence is Tubulin alpha-3 chain (445 aa).

Positions 11, 72, 141, 145, 146, 180, 207, and 229 each coordinate GTP. Glu72 is a binding site for Mg(2+). Glu255 is an active-site residue.

The protein belongs to the tubulin family. Dimer of alpha and beta chains. A typical microtubule is a hollow water-filled tube with an outer diameter of 25 nm and an inner diameter of 15 nM. Alpha-beta heterodimers associate head-to-tail to form protofilaments running lengthwise along the microtubule wall with the beta-tubulin subunit facing the microtubule plus end conferring a structural polarity. Microtubules usually have 13 protofilaments but different protofilament numbers can be found in some organisms and specialized cells. Interacts with NUM1. Mg(2+) is required as a cofactor.

It is found in the cytoplasm. It localises to the cytoskeleton. It catalyses the reaction GTP + H2O = GDP + phosphate + H(+). In terms of biological role, tubulin is the major constituent of microtubules, a cylinder consisting of laterally associated linear protofilaments composed of alpha- and beta-tubulin heterodimers. Microtubules grow by the addition of GTP-tubulin dimers to the microtubule end, where a stabilizing cap forms. Below the cap, tubulin dimers are in GDP-bound state, owing to GTPase activity of alpha-tubulin. This chain is Tubulin alpha-3 chain (TUB3), found in Saccharomyces cerevisiae (strain ATCC 204508 / S288c) (Baker's yeast).